A 291-amino-acid polypeptide reads, in one-letter code: ATP synthase gamma chain (291 aa).

Belongs to the ATPase gamma chain family. F-type ATPases have 2 components, CF(1) - the catalytic core - and CF(0) - the membrane proton channel. CF(1) has five subunits: alpha(3), beta(3), gamma(1), delta(1), epsilon(1). CF(0) has three main subunits: a, b and c.

The protein resides in the cell inner membrane. In terms of biological role, produces ATP from ADP in the presence of a proton gradient across the membrane. The gamma chain is believed to be important in regulating ATPase activity and the flow of protons through the CF(0) complex. This is ATP synthase gamma chain from Aquifex aeolicus (strain VF5).